A 198-amino-acid chain; its full sequence is Type II secretion system protein J (198 aa).

Positions 1-7 (MIRRSSG) are cleaved as a propeptide — leader sequence. F8 carries the N-methylphenylalanine modification. A helical membrane pass occupies residues 8–28 (FTLVEMLLALAILAALSVAAV).

This sequence belongs to the GSP J family. In terms of assembly, type II secretion is composed of four main components: the outer membrane complex, the inner membrane complex, the cytoplasmic secretion ATPase and the periplasm-spanning pseudopilus. Interacts with core component PulG. Post-translationally, cleaved by prepilin peptidase. In terms of processing, methylated by prepilin peptidase at the amino group of the N-terminal phenylalanine once the leader sequence is cleaved by prepilin peptidase.

The protein resides in the cell inner membrane. Its function is as follows. Component of the type II secretion system required for the energy-dependent secretion of extracellular factors such as proteases and toxins from the periplasm. Part of the pseudopilus tip complex that is critical for the recognition and binding of secretion substrates. The chain is Type II secretion system protein J (pulJ) from Klebsiella pneumoniae.